Here is a 1170-residue protein sequence, read N- to C-terminus: Cellulose synthase-like protein D2 (1170 aa).

Disordered regions lie at residues 1 to 75 (MASN…PESG) and 269 to 295 (NEVD…EFTS). Positions 10–24 (RHSNSSRLSRMSYSG) are enriched in low complexity. The span at 273-288 (NGGGGGGGGGLGGGDG) shows a compositional bias: gly residues. The next 2 membrane-spanning stretches (helical) occupy residues 311–331 (VLSP…LFLA) and 341–361 (AMWL…SWLL). Asp441 is an active-site residue. Residues 527–551 (HAREEIKAMKRQREAALDDVVEAVK) are a coiled coil. Asp873 is an active-site residue. Helical transmembrane passes span 955-975 (IFLI…QFIV), 981-1001 (TFLT…VLEI), 1027-1047 (LAAV…SFTL), 1070-1090 (SLMI…AVGF), 1104-1124 (LLGG…FAKG), and 1134-1154 (TIVF…WVAI).

Belongs to the glycosyltransferase 2 family. Plant cellulose synthase-like D subfamily.

The protein localises to the golgi apparatus membrane. Functionally, thought to be a Golgi-localized beta-glycan synthase that polymerize the backbones of noncellulosic polysaccharides (hemicelluloses) of plant cell wall. In Oryza sativa subsp. indica (Rice), this protein is Cellulose synthase-like protein D2 (CSLD2).